Consider the following 527-residue polypeptide: Probable glucomannan 4-beta-mannosyltransferase 9 (527 aa).

A helical transmembrane segment spans residues 37–59 (AMSVMLFVEKVYMSVVLVGVHLF). The active site involves Asp-131. Positions 190 and 192 each coordinate substrate. Asp-284 is an active-site residue. The next 4 helical transmembrane spans lie at 363-383 (IIGH…TVLI), 399-419 (IVTI…IFWV), 478-498 (ALEL…IAYG), and 505-525 (FLFL…GTIV).

This sequence belongs to the glycosyltransferase 2 family. Plant cellulose synthase-like A subfamily.

The protein localises to the golgi apparatus membrane. It catalyses the reaction GDP-mannose + (glucomannan)n = GDP + (glucomannan)n+1.. In terms of biological role, probable mannan synthase which consists of a 4-beta-mannosyltransferase activity on mannan using GDP-mannose. The beta-1,4-mannan product is the backbone for galactomannan synthesis by galactomannan galactosyltransferase. Galactomannan is a noncellulosic polysaccharides of plant cell wall. The chain is Probable glucomannan 4-beta-mannosyltransferase 9 from Oryza sativa subsp. japonica (Rice).